The following is a 445-amino-acid chain: Selenocysteine lyase (445 aa).

M1 is modified (N-acetylmethionine). The segment at 1 to 28 (MEAAVAPGRDAPAPAASQPSGCGKHNSP) is disordered. A Phosphoserine modification is found at S129. At K259 the chain carries N6-(pyridoxal phosphate)lysine. C388 acts as the S-selanylcysteine intermediate in catalysis.

It belongs to the class-V pyridoxal-phosphate-dependent aminotransferase family. Homodimer. The cofactor is pyridoxal 5'-phosphate.

The protein localises to the cytoplasm. Its subcellular location is the cytosol. It carries out the reaction L-selenocysteine + AH2 = hydrogenselenide + L-alanine + A + H(+). In terms of biological role, catalyzes the decomposition of L-selenocysteine to L-alanine and elemental selenium. This chain is Selenocysteine lyase (SCLY), found in Homo sapiens (Human).